Consider the following 103-residue polypeptide: NADH-quinone oxidoreductase subunit K (103 aa).

Transmembrane regions (helical) follow at residues 7–27 (TEHG…GVLV), 31–51 (LIFM…AFIV), and 65–85 (FMLI…LILL).

The protein belongs to the complex I subunit 4L family. NDH-1 is composed of 14 different subunits. Subunits NuoA, H, J, K, L, M, N constitute the membrane sector of the complex.

Its subcellular location is the cell inner membrane. It carries out the reaction a quinone + NADH + 5 H(+)(in) = a quinol + NAD(+) + 4 H(+)(out). In terms of biological role, NDH-1 shuttles electrons from NADH, via FMN and iron-sulfur (Fe-S) centers, to quinones in the respiratory chain. The immediate electron acceptor for the enzyme in this species is believed to be ubiquinone. Couples the redox reaction to proton translocation (for every two electrons transferred, four hydrogen ions are translocated across the cytoplasmic membrane), and thus conserves the redox energy in a proton gradient. The chain is NADH-quinone oxidoreductase subunit K from Nitrosococcus oceani (strain ATCC 19707 / BCRC 17464 / JCM 30415 / NCIMB 11848 / C-107).